Consider the following 439-residue polypeptide: Diaminopimelate decarboxylase (439 aa).

At Lys-66 the chain carries N6-(pyridoxal phosphate)lysine. Pyridoxal 5'-phosphate is bound by residues Gly-248 and 290-293 (EPGR). Residues Arg-293, Arg-330, and Tyr-334 each contribute to the substrate site. Cys-361 (proton donor) is an active-site residue. Positions 362 and 390 each coordinate substrate. Residue Tyr-390 participates in pyridoxal 5'-phosphate binding.

The protein belongs to the Orn/Lys/Arg decarboxylase class-II family. LysA subfamily. As to quaternary structure, homodimer. Pyridoxal 5'-phosphate is required as a cofactor.

It catalyses the reaction meso-2,6-diaminopimelate + H(+) = L-lysine + CO2. It participates in amino-acid biosynthesis; L-lysine biosynthesis via DAP pathway; L-lysine from DL-2,6-diaminopimelate: step 1/1. Functionally, specifically catalyzes the decarboxylation of meso-diaminopimelate (meso-DAP) to L-lysine. In Halalkalibacterium halodurans (strain ATCC BAA-125 / DSM 18197 / FERM 7344 / JCM 9153 / C-125) (Bacillus halodurans), this protein is Diaminopimelate decarboxylase.